The chain runs to 483 residues: 23S rRNA (uracil(1939)-C(5))-methyltransferase RlmD (483 aa).

Positions 1–11 are enriched in basic residues; sequence MTGLGKRRPAR. Positions 1–36 are disordered; sequence MTGLGKRRPARSRSGVSGLRERRQPASVERSAGSEG. The region spanning 29–90 is the TRAM domain; the sequence is ERSAGSEGRR…KRFDEAHVSE (62 aa). Positions 103, 109, 112, and 189 each coordinate [4Fe-4S] cluster. The S-adenosyl-L-methionine site is built by glutamine 298, phenylalanine 332, asparagine 337, glutamate 353, aspartate 379, and aspartate 401. The Nucleophile role is filled by cysteine 427.

Belongs to the class I-like SAM-binding methyltransferase superfamily. RNA M5U methyltransferase family. RlmD subfamily.

The enzyme catalyses uridine(1939) in 23S rRNA + S-adenosyl-L-methionine = 5-methyluridine(1939) in 23S rRNA + S-adenosyl-L-homocysteine + H(+). Functionally, catalyzes the formation of 5-methyl-uridine at position 1939 (m5U1939) in 23S rRNA. This Halomonas elongata (strain ATCC 33173 / DSM 2581 / NBRC 15536 / NCIMB 2198 / 1H9) protein is 23S rRNA (uracil(1939)-C(5))-methyltransferase RlmD.